A 102-amino-acid polypeptide reads, in one-letter code: NADH-quinone oxidoreductase subunit K 1 (102 aa).

3 consecutive transmembrane segments (helical) span residues 5 to 25, 31 to 51, and 65 to 85; these read LSHY…GIFL, IVIL…MVAF, and LFIL…LVVF.

This sequence belongs to the complex I subunit 4L family. In terms of assembly, NDH-1 is composed of 14 different subunits. Subunits NuoA, H, J, K, L, M, N constitute the membrane sector of the complex.

It is found in the cell inner membrane. The enzyme catalyses a quinone + NADH + 5 H(+)(in) = a quinol + NAD(+) + 4 H(+)(out). Functionally, NDH-1 shuttles electrons from NADH, via FMN and iron-sulfur (Fe-S) centers, to quinones in the respiratory chain. The immediate electron acceptor for the enzyme in this species is believed to be ubiquinone. Couples the redox reaction to proton translocation (for every two electrons transferred, four hydrogen ions are translocated across the cytoplasmic membrane), and thus conserves the redox energy in a proton gradient. The chain is NADH-quinone oxidoreductase subunit K 1 from Rhizobium etli (strain CIAT 652).